A 458-amino-acid polypeptide reads, in one-letter code: Na(+)/H(+) antiporter NhaA (458 aa).

A run of 12 helical transmembrane segments spans residues 27–47 (FLHV…AALI), 78–98 (LHFW…GMEI), 114–134 (ILPI…YLSF), 143–163 (GWAV…ALLG), 172–192 (VILL…IAFF), 201–221 (GLAI…IGLA), 222–242 (SAWL…ITGV), 249–269 (VILG…PLTI), 316–336 (PWVA…VSFA), 346–366 (FLVV…GIIT), 388–408 (ILLI…VSML), and 421–441 (IGVL…GLIY).

This sequence belongs to the NhaA Na(+)/H(+) (TC 2.A.33) antiporter family.

It localises to the cell inner membrane. It carries out the reaction Na(+)(in) + 2 H(+)(out) = Na(+)(out) + 2 H(+)(in). In terms of biological role, na(+)/H(+) antiporter that extrudes sodium in exchange for external protons. The sequence is that of Na(+)/H(+) antiporter NhaA from Bartonella quintana (strain Toulouse) (Rochalimaea quintana).